We begin with the raw amino-acid sequence, 393 residues long: Methyltransferase-like protein 22 (393 aa).

The interval W54 to S87 is disordered. S120 carries the post-translational modification Phosphoserine.

Belongs to the methyltransferase superfamily. METTL22 family. As to quaternary structure, interacts with members of the heat shock protein 90 and 70 families; these proteins probably are methylation substrates.

The protein resides in the nucleus. It carries out the reaction L-lysyl-[protein] + 3 S-adenosyl-L-methionine = N(6),N(6),N(6)-trimethyl-L-lysyl-[protein] + 3 S-adenosyl-L-homocysteine + 3 H(+). Its function is as follows. Protein N-lysine methyltransferase. Trimethylates KIN at Lys-135 (in vitro). This is Methyltransferase-like protein 22 (Mettl22) from Mus musculus (Mouse).